The primary structure comprises 102 residues: Outer membrane protein assembly factor BamE (102 aa).

A signal peptide spans 1-20 (MNNYIKALLIIICFSSCSIS).

Belongs to the BamE family. In terms of assembly, part of the Bam complex.

Its subcellular location is the cell outer membrane. Its function is as follows. Part of the outer membrane protein assembly complex, which is involved in assembly and insertion of beta-barrel proteins into the outer membrane. The protein is Outer membrane protein assembly factor BamE of Buchnera aphidicola subsp. Acyrthosiphon pisum (strain APS) (Acyrthosiphon pisum symbiotic bacterium).